Reading from the N-terminus, the 168-residue chain is Venom nerve growth factor (168 aa).

The signal sequence occupies residues 1–18 (MSMLCYTLIIAFLIGIWA). The propeptide occupies 19–123 (APKSEDNVSL…ADSLNRNIRA (105 aa)). N-linked (GlcNAc...) asparagine glycosylation occurs at Asn-25. The segment at 48-70 (LKTSQNTDQHSPAPKKAEDQEFG) is disordered. Asn-148 is a glycosylation site (N-linked (GlcNAc...) asparagine).

It belongs to the NGF-beta family. As to quaternary structure, homodimer; non-covalently linked. In terms of tissue distribution, expressed by the venom gland.

The protein resides in the secreted. Its function is as follows. Nerve growth factor is important for the development and maintenance of the sympathetic and sensory nervous systems. It stimulates division and differentiation of sympathetic and embryonic sensory neurons as well as basal forebrain cholinergic neurons in the brain. Its relevance in the snake venom is not clear. However, it has been shown to inhibit metalloproteinase-dependent proteolysis of platelet glycoprotein Ib alpha, suggesting a metalloproteinase inhibition to prevent metalloprotease autodigestion and/or protection against prey proteases. The sequence is that of Venom nerve growth factor from Echis ocellatus (Ocellated saw-scaled viper).